A 1792-amino-acid chain; its full sequence is Eukaryotic translation initiation factor 4G (1792 aa).

The segment covering 1–12 (MSQRGDRGEGHA) has biased composition (basic and acidic residues). 11 disordered regions span residues 1–285 (MSQR…PRPP), 424–446 (DSSG…TYGS), 491–590 (SPSM…PTPV), 612–659 (NSVP…EDLK), 678–761 (GVNK…NESH), 874–912 (VASE…EITR), 960–993 (SSSI…LDDW), 999–1018 (MSTP…EANG), 1275–1299 (GERE…EERE), 1407–1503 (WQQR…HRTT), and 1537–1600 (ELSS…KLYS). Gly residues predominate over residues 21-42 (FGGGHRGGGGVGGAGKGGGGSS). Pro residues predominate over residues 88–107 (PLRPPAPQNAPAHVPVPAPR). Polar residues-rich tracts occupy residues 147-156 (RISSTSTSQG) and 179-191 (STMQ…SSAP). Composition is skewed to low complexity over residues 216-243 (PQAP…PLQQ), 263-278 (PSQV…SVPN), and 432-442 (PSVQQQSQPVS). Positions 491 to 517 (SPSMNTGPGSNKDNLAGSTTSGHSQVT) are enriched in polar residues. Basic and acidic residues-rich tracts occupy residues 545-564 (DVNK…KDNE), 571-587 (KSGE…EKHP), and 633-643 (DSNKNATKDTR). The segment covering 644–654 (NLSQEPQSASS) has biased composition (polar residues). Residues 699 to 718 (AADASSIDRSSARSTSESTE) show a composition bias toward low complexity. A compositionally biased stretch (basic and acidic residues) spans 964 to 990 (ADHELPDESSEKEVNMGEDEGKKKVEL). The interval 1018–1030 (GRKRYSRDFLLTL) is EIF4E-binding. The region spanning 1183–1406 (QRQLKAILNK…RDSIDLRKNK (224 aa)) is the MIF4G domain. The segment covering 1278–1289 (EEAEADKTEEEG) has biased composition (acidic residues). Composition is skewed to basic and acidic residues over residues 1290-1299 (EIKQTKEERE) and 1411-1432 (RKVE…ERHA). 2 stretches are compositionally biased toward low complexity: residues 1439–1450 (RGSVVGSGPRRG) and 1461–1470 (SAAALASPSS). 2 stretches are compositionally biased toward basic and acidic residues: residues 1490–1503 (IRFE…HRTT) and 1559–1572 (AREE…DRSG). Residues 1576-1593 (PNTQFAGPSNRPASQEGR) are compositionally biased toward polar residues. The region spanning 1603–1727 (DLREKSISAI…SLQEVGTLIE (125 aa)) is the MI domain.

Belongs to the eukaryotic initiation factor 4G family. EIF4F is a multi-subunit complex, the composition of which varies with external and internal environmental conditions. It is composed of at least EIF4A, EIF4E and EIF4G. In higher plants two isoforms of EIF4F have been identified, named isoform EIF4F and isoform EIF(iso)4F. Isoform EIF4F has subunits p220 and p26, whereas isoform EIF(iso)4F has subunits p82 and p28.

Component of the protein complex eIF4F, which is involved in the recognition of the mRNA cap, ATP-dependent unwinding of 5'-terminal secondary structure and recruitment of mRNA to the ribosome. This is Eukaryotic translation initiation factor 4G from Oryza sativa subsp. japonica (Rice).